Here is a 2051-residue protein sequence, read N- to C-terminus: Autophagy-related protein 2 (2051 aa).

The Chorein N-terminal domain maps to 31-121; sequence QALDLDNLNF…QDEQTAKNKK (91 aa). A compositionally biased stretch (basic and acidic residues) spans 108-117; that stretch reads SKQEQDEQTA. Disordered regions lie at residues 108-129, 152-179, 297-331, 363-384, 419-466, and 501-564; these read SKQEQDEQTAKNKKGTHKDGDE, RRLEKALAEEAQEALSESMSDSETDDDG, SLVKPQGPAPHDVPSTLRDMSGSMQSSVGGLDMSI, DTQYPEAEENVAGSSPLSTPRA, RSEP…ADTE, and PGGW…DTST. Composition is skewed to polar residues over residues 374 to 383 and 426 to 435; these read AGSSPLSTPR and PPTSFQPQTM. Residues 436 to 454 are compositionally biased toward low complexity; it reads PSGAVSPAPSEPSSSASSV.

It belongs to the ATG2 family.

Its subcellular location is the preautophagosomal structure membrane. It is found in the endoplasmic reticulum membrane. The enzyme catalyses a 1,2-diacyl-sn-glycero-3-phosphocholine(in) = a 1,2-diacyl-sn-glycero-3-phosphocholine(out). It catalyses the reaction a 1,2-diacyl-sn-glycero-3-phospho-L-serine(in) = a 1,2-diacyl-sn-glycero-3-phospho-L-serine(out). It carries out the reaction a 1,2-diacyl-sn-glycero-3-phosphoethanolamine(in) = a 1,2-diacyl-sn-glycero-3-phosphoethanolamine(out). In terms of biological role, lipid transfer protein required for autophagosome completion and peroxisome degradation. Tethers the edge of the isolation membrane (IM) to the endoplasmic reticulum (ER) and mediates direct lipid transfer from ER to IM for IM expansion. Atg-2 binds to the ER exit site (ERES), which is the membrane source for autophagosome formation, using basic residues in its N-terminal region (NR) and to the expanding edge of the IM through its C-terminal region. The latter binding is assisted by an atg-18-PtdIns3P interaction. Atg-2 then extracts phospholipids from the membrane source using its NR and transfers them to atg-9 to the IM through its predicted beta-sheet-rich structure for membrane expansion. This chain is Autophagy-related protein 2 (apg-2), found in Neurospora crassa (strain ATCC 24698 / 74-OR23-1A / CBS 708.71 / DSM 1257 / FGSC 987).